A 112-amino-acid polypeptide reads, in one-letter code: MESKACAKFIRVSPRKARLIASNVKGKTVELAMNILKFTPNKSAGIILGVMRSALANAEHNAKLDVDTLIVKEVIVNEGPTWKRFMPRAQGRATHIRKRSSHISVVLSEGQE.

It belongs to the universal ribosomal protein uL22 family. Part of the 50S ribosomal subunit.

Its function is as follows. This protein binds specifically to 23S rRNA; its binding is stimulated by other ribosomal proteins, e.g. L4, L17, and L20. It is important during the early stages of 50S assembly. It makes multiple contacts with different domains of the 23S rRNA in the assembled 50S subunit and ribosome. Functionally, the globular domain of the protein is located near the polypeptide exit tunnel on the outside of the subunit, while an extended beta-hairpin is found that lines the wall of the exit tunnel in the center of the 70S ribosome. The polypeptide is Large ribosomal subunit protein uL22 (Lawsonia intracellularis (strain PHE/MN1-00)).